Here is a 426-residue protein sequence, read N- to C-terminus: Serine--tRNA ligase (426 aa).

Residues 44–67 (TEKQALQSERNATSKQIGMLKKKG) are disordered. Over residues 47–59 (QALQSERNATSKQ) the composition is skewed to polar residues. Residue 231-233 (TAE) participates in L-serine binding. ATP contacts are provided by residues 262–264 (RRE) and Val-278. Glu-285 is a binding site for L-serine. 349-352 (EVSS) contacts ATP. An L-serine-binding site is contributed by Ser-384.

It belongs to the class-II aminoacyl-tRNA synthetase family. Type-1 seryl-tRNA synthetase subfamily. Homodimer. The tRNA molecule binds across the dimer.

It is found in the cytoplasm. The enzyme catalyses tRNA(Ser) + L-serine + ATP = L-seryl-tRNA(Ser) + AMP + diphosphate + H(+). The catalysed reaction is tRNA(Sec) + L-serine + ATP = L-seryl-tRNA(Sec) + AMP + diphosphate + H(+). It functions in the pathway aminoacyl-tRNA biosynthesis; selenocysteinyl-tRNA(Sec) biosynthesis; L-seryl-tRNA(Sec) from L-serine and tRNA(Sec): step 1/1. Functionally, catalyzes the attachment of serine to tRNA(Ser). Is also able to aminoacylate tRNA(Sec) with serine, to form the misacylated tRNA L-seryl-tRNA(Sec), which will be further converted into selenocysteinyl-tRNA(Sec). The sequence is that of Serine--tRNA ligase from Akkermansia muciniphila (strain ATCC BAA-835 / DSM 22959 / JCM 33894 / BCRC 81048 / CCUG 64013 / CIP 107961 / Muc).